Reading from the N-terminus, the 220-residue chain is Putative NAD(P)H nitroreductase (220 aa).

Residue 155-160 (GASALG) participates in NAD(+) binding.

This sequence belongs to the nitroreductase family. It depends on FMN as a cofactor.

This chain is Putative NAD(P)H nitroreductase, found in Haemophilus influenzae (strain ATCC 51907 / DSM 11121 / KW20 / Rd).